A 140-amino-acid chain; its full sequence is Nucleoside diphosphate kinase (140 aa).

The ATP site is built by Lys11, Phe59, Arg87, Thr93, Arg104, and Asn114. His117 (pros-phosphohistidine intermediate) is an active-site residue.

The protein belongs to the NDK family. As to quaternary structure, homotetramer. The cofactor is Mg(2+).

Its subcellular location is the cytoplasm. The catalysed reaction is a 2'-deoxyribonucleoside 5'-diphosphate + ATP = a 2'-deoxyribonucleoside 5'-triphosphate + ADP. The enzyme catalyses a ribonucleoside 5'-diphosphate + ATP = a ribonucleoside 5'-triphosphate + ADP. Major role in the synthesis of nucleoside triphosphates other than ATP. The ATP gamma phosphate is transferred to the NDP beta phosphate via a ping-pong mechanism, using a phosphorylated active-site intermediate. This is Nucleoside diphosphate kinase from Methylobacterium sp. (strain 4-46).